The primary structure comprises 124 residues: Late embryogenesis abundant protein 37 (124 aa).

Residues 1–35 (MSQSLFNLKSLSRSINNTIRMRRYIVITKASQRAY) constitute a mitochondrion transit peptide.

The protein belongs to the LEA type 3 family.

The protein localises to the mitochondrion. In Arabidopsis thaliana (Mouse-ear cress), this protein is Late embryogenesis abundant protein 37.